The sequence spans 158 residues: Ribosome maturation factor RimP (158 aa).

The protein belongs to the RimP family.

Its subcellular location is the cytoplasm. Functionally, required for maturation of 30S ribosomal subunits. The protein is Ribosome maturation factor RimP of Deinococcus radiodurans (strain ATCC 13939 / DSM 20539 / JCM 16871 / CCUG 27074 / LMG 4051 / NBRC 15346 / NCIMB 9279 / VKM B-1422 / R1).